The chain runs to 230 residues: Response regulator MprA (230 aa).

A Response regulatory domain is found at 4–118; the sequence is RILVVDDDRA…ELLARMRALL (115 aa). A 4-aspartylphosphate modification is found at D48. The ompR/PhoB-type DNA-binding region spans 129–227; it reads SMAMRFSDLT…VRGVGYVLRE (99 aa).

Phosphorylated and dephosphorylated by MprB.

It localises to the cytoplasm. Its function is as follows. Member of the two-component regulatory system MprB/MprA which contributes to maintaining a balance among several systems involved in stress resistance and is required for establishment and maintenance of persistent infection in the host. Functions as a transcriptional regulator that recognizes a 19-bp nucleotide motif comprizing two loosely conserved 8-bp direct DNA-binding motif repeats separated by a 3-bp spacer region. The protein is Response regulator MprA (mprA) of Mycobacterium tuberculosis (strain ATCC 25177 / H37Ra).